The chain runs to 421 residues: Eukaryotic translation initiation factor 3 subunit E (421 aa).

The region spanning 215–394 is the PCI domain; that stretch reads FFQNDTKGKD…STVILNHPSV (180 aa).

It belongs to the eIF-3 subunit E family. Component of the eukaryotic translation initiation factor 3 (eIF-3) complex.

It localises to the cytoplasm. Component of the eukaryotic translation initiation factor 3 (eIF-3) complex, which is involved in protein synthesis of a specialized repertoire of mRNAs and, together with other initiation factors, stimulates binding of mRNA and methionyl-tRNAi to the 40S ribosome. The eIF-3 complex specifically targets and initiates translation of a subset of mRNAs involved in cell proliferation. The protein is Eukaryotic translation initiation factor 3 subunit E of Yarrowia lipolytica (strain CLIB 122 / E 150) (Yeast).